We begin with the raw amino-acid sequence, 359 residues long: Quinolinate synthase (359 aa).

Iminosuccinate contacts are provided by histidine 81 and serine 99. Residue cysteine 144 participates in [4Fe-4S] cluster binding. Iminosuccinate is bound by residues tyrosine 170–asparagine 172 and serine 187. [4Fe-4S] cluster is bound at residue cysteine 229. Iminosuccinate contacts are provided by residues histidine 255–glutamate 257 and threonine 272. Cysteine 315 is a [4Fe-4S] cluster binding site.

Belongs to the quinolinate synthase family. Type 2 subfamily. The cofactor is [4Fe-4S] cluster.

It is found in the cytoplasm. The catalysed reaction is iminosuccinate + dihydroxyacetone phosphate = quinolinate + phosphate + 2 H2O + H(+). It participates in cofactor biosynthesis; NAD(+) biosynthesis; quinolinate from iminoaspartate: step 1/1. Catalyzes the condensation of iminoaspartate with dihydroxyacetone phosphate to form quinolinate. The chain is Quinolinate synthase from Sinorhizobium fredii (strain NBRC 101917 / NGR234).